We begin with the raw amino-acid sequence, 126 residues long: Holo-[acyl-carrier-protein] synthase (126 aa).

2 residues coordinate Mg(2+): Asp-9 and Glu-58.

This sequence belongs to the P-Pant transferase superfamily. AcpS family. Mg(2+) is required as a cofactor.

It localises to the cytoplasm. It carries out the reaction apo-[ACP] + CoA = holo-[ACP] + adenosine 3',5'-bisphosphate + H(+). Transfers the 4'-phosphopantetheine moiety from coenzyme A to a Ser of acyl-carrier-protein. The sequence is that of Holo-[acyl-carrier-protein] synthase from Vibrio campbellii (strain ATCC BAA-1116).